A 212-amino-acid chain; its full sequence is ATP-dependent dethiobiotin synthetase BioD (212 aa).

Residue 13–18 (GIGKTV) coordinates ATP. A Mg(2+)-binding site is contributed by Thr17. Residue Lys33 is part of the active site. Ser37 contacts substrate. Glu100 provides a ligand contact to Mg(2+). ATP contacts are provided by residues 100–103 (EGAG) and 184–186 (PLL).

It belongs to the dethiobiotin synthetase family. Homodimer. It depends on Mg(2+) as a cofactor.

The protein resides in the cytoplasm. It catalyses the reaction (7R,8S)-7,8-diammoniononanoate + CO2 + ATP = (4R,5S)-dethiobiotin + ADP + phosphate + 3 H(+). Its pathway is cofactor biosynthesis; biotin biosynthesis; biotin from 7,8-diaminononanoate: step 1/2. In terms of biological role, catalyzes a mechanistically unusual reaction, the ATP-dependent insertion of CO2 between the N7 and N8 nitrogen atoms of 7,8-diaminopelargonic acid (DAPA, also called 7,8-diammoniononanoate) to form a ureido ring. This chain is ATP-dependent dethiobiotin synthetase BioD, found in Brucella melitensis biotype 2 (strain ATCC 23457).